Consider the following 373-residue polypeptide: Dual-specificity RNA methyltransferase RlmN (373 aa).

Glu-94 functions as the Proton acceptor in the catalytic mechanism. The 240-residue stretch at 100–339 (EDDRATLCVS…VIVRKTRGDD (240 aa)) folds into the Radical SAM core domain. Residues Cys-107 and Cys-344 are joined by a disulfide bond. The [4Fe-4S] cluster site is built by Cys-114, Cys-118, and Cys-121. S-adenosyl-L-methionine-binding positions include 168 to 169 (GE), Ser-200, 222 to 224 (SIH), and Asn-301. Cys-344 acts as the S-methylcysteine intermediate in catalysis.

Belongs to the radical SAM superfamily. RlmN family. [4Fe-4S] cluster is required as a cofactor.

The protein localises to the cytoplasm. It catalyses the reaction adenosine(2503) in 23S rRNA + 2 reduced [2Fe-2S]-[ferredoxin] + 2 S-adenosyl-L-methionine = 2-methyladenosine(2503) in 23S rRNA + 5'-deoxyadenosine + L-methionine + 2 oxidized [2Fe-2S]-[ferredoxin] + S-adenosyl-L-homocysteine. It carries out the reaction adenosine(37) in tRNA + 2 reduced [2Fe-2S]-[ferredoxin] + 2 S-adenosyl-L-methionine = 2-methyladenosine(37) in tRNA + 5'-deoxyadenosine + L-methionine + 2 oxidized [2Fe-2S]-[ferredoxin] + S-adenosyl-L-homocysteine. Functionally, specifically methylates position 2 of adenine 2503 in 23S rRNA and position 2 of adenine 37 in tRNAs. m2A2503 modification seems to play a crucial role in the proofreading step occurring at the peptidyl transferase center and thus would serve to optimize ribosomal fidelity. In Shewanella denitrificans (strain OS217 / ATCC BAA-1090 / DSM 15013), this protein is Dual-specificity RNA methyltransferase RlmN.